The following is a 474-amino-acid chain: tRNA-2-methylthio-N(6)-dimethylallyladenosine synthase (474 aa).

An MTTase N-terminal domain is found at 3–120 (KKLHIKTWGC…LPEMINSVRG (118 aa)). [4Fe-4S] cluster is bound by residues cysteine 12, cysteine 49, cysteine 83, cysteine 157, cysteine 161, and cysteine 164. Residues 143–375 (RAEGPTAFVS…QERINQQAMA (233 aa)) enclose the Radical SAM core domain. The region spanning 378 to 441 (RRMLGTTQRI…PNSLRGKVVR (64 aa)) is the TRAM domain.

Belongs to the methylthiotransferase family. MiaB subfamily. As to quaternary structure, monomer. [4Fe-4S] cluster serves as cofactor.

The protein localises to the cytoplasm. It carries out the reaction N(6)-dimethylallyladenosine(37) in tRNA + (sulfur carrier)-SH + AH2 + 2 S-adenosyl-L-methionine = 2-methylsulfanyl-N(6)-dimethylallyladenosine(37) in tRNA + (sulfur carrier)-H + 5'-deoxyadenosine + L-methionine + A + S-adenosyl-L-homocysteine + 2 H(+). Its function is as follows. Catalyzes the methylthiolation of N6-(dimethylallyl)adenosine (i(6)A), leading to the formation of 2-methylthio-N6-(dimethylallyl)adenosine (ms(2)i(6)A) at position 37 in tRNAs that read codons beginning with uridine. The sequence is that of tRNA-2-methylthio-N(6)-dimethylallyladenosine synthase from Escherichia coli O81 (strain ED1a).